The primary structure comprises 305 residues: LysM and putative peptidoglycan-binding domain-containing protein 3 (305 aa).

Residues 1-216 (MAGRNQNRTV…PYYGADWGIG (216 aa)) lie on the Extracellular side of the membrane. Residues Asn-7 and Asn-26 are each glycosylated (N-linked (GlcNAc...) asparagine). Ser-55 is modified (phosphoserine). Residues 65–109 (LTKDIQEGDTLNAVALQYCCTVADIKRVNNLISDQDFFALRSIKI) enclose the LysM domain. Residue Asn-199 is glycosylated (N-linked (GlcNAc...) asparagine). Residues 217-237 (WWTAVVIMLIVGIITPVFYLL) form a helical membrane-spanning segment. Residues 238 to 305 (YYEILAKVDV…PQAHDAQHKT (68 aa)) are Cytoplasmic-facing. Positions 253 to 305 (VGSSHLHPGLTPPTQHREMENEIGPTKGIPVGQQDDHKLYRQDPQAHDAQHKT) are disordered. The segment covering 286–305 (QDDHKLYRQDPQAHDAQHKT) has biased composition (basic and acidic residues).

It is found in the cell membrane. The protein localises to the golgi apparatus. Its function is as follows. Essential for Golgi structural integrity. This is LysM and putative peptidoglycan-binding domain-containing protein 3 (Lysmd3) from Mus musculus (Mouse).